A 128-amino-acid polypeptide reads, in one-letter code: Cytochrome c oxidase subunit 5B, mitochondrial (128 aa).

The N-terminal 30 residues, 1-30 (MKRGSAALEVRELKMQTPTASCVLSTQRAN), are a transit peptide targeting the mitochondrion. Residues K67 and K85 each carry the N6-acetyllysine modification. Zn(2+)-binding residues include C90, C92, C112, and C115. K120 carries the post-translational modification N6-acetyllysine.

The protein belongs to the cytochrome c oxidase 5b family. As to expression, expressed in testis. Not expressed in brain, heart, liver, kidney, spleen, lung, duodenum, muscle, epididymis, vagina, uterus and ovary.

The protein localises to the mitochondrion inner membrane. In terms of biological role, this protein is one of the nuclear-coded polypeptide chains of cytochrome c oxidase, the terminal oxidase in mitochondrial electron transport. The sequence is that of Cytochrome c oxidase subunit 5B, mitochondrial from Vulpes vulpes (Red fox).